We begin with the raw amino-acid sequence, 319 residues long: Lambda-crystallin homolog (319 aa).

Position 2 is an N-acetylalanine (alanine 2). A Phosphoserine modification is found at serine 3. NAD(+) is bound by residues 16–17 (LI), aspartate 36, glutamate 97, and lysine 102.

It belongs to the 3-hydroxyacyl-CoA dehydrogenase family. In terms of assembly, homodimer.

It localises to the cytoplasm. The enzyme catalyses L-gulonate + NAD(+) = 3-dehydro-L-gulonate + NADH + H(+). Inhibited by malonate. Has high L-gulonate 3-dehydrogenase activity. It also exhibits low dehydrogenase activity toward L-3-hydroxybutyrate (HBA) and L-threonate. The chain is Lambda-crystallin homolog (Cryl1) from Rattus norvegicus (Rat).